Here is a 245-residue protein sequence, read N- to C-terminus: Small ribosomal subunit protein uS2 (245 aa).

Belongs to the universal ribosomal protein uS2 family.

This chain is Small ribosomal subunit protein uS2, found in Pseudomonas fluorescens (strain Pf0-1).